We begin with the raw amino-acid sequence, 478 residues long: tRNA modification GTPase MnmE (478 aa).

(6S)-5-formyl-5,6,7,8-tetrahydrofolate contacts are provided by arginine 25, glutamate 82, and lysine 135. Residues 231–400 form the TrmE-type G domain; sequence GIKVVIAGQP…LREQLLRVVG (170 aa). Position 241 (asparagine 241) interacts with K(+). Residues 241–246, 260–266, and 285–288 contribute to the GTP site; these read NVGKSS, TPVAGTT, and DTAG. Serine 245 contacts Mg(2+). K(+) contacts are provided by threonine 260, valine 262, and threonine 265. Threonine 266 serves as a coordination point for Mg(2+). Lysine 478 contributes to the (6S)-5-formyl-5,6,7,8-tetrahydrofolate binding site.

Belongs to the TRAFAC class TrmE-Era-EngA-EngB-Septin-like GTPase superfamily. TrmE GTPase family. Homodimer. Heterotetramer of two MnmE and two MnmG subunits. K(+) is required as a cofactor.

Its subcellular location is the cytoplasm. Its function is as follows. Exhibits a very high intrinsic GTPase hydrolysis rate. Involved in the addition of a carboxymethylaminomethyl (cmnm) group at the wobble position (U34) of certain tRNAs, forming tRNA-cmnm(5)s(2)U34. This Polaromonas naphthalenivorans (strain CJ2) protein is tRNA modification GTPase MnmE.